Here is a 183-residue protein sequence, read N- to C-terminus: Ribosome-recycling factor (183 aa).

Belongs to the RRF family.

Its subcellular location is the cytoplasm. In terms of biological role, responsible for the release of ribosomes from messenger RNA at the termination of protein biosynthesis. May increase the efficiency of translation by recycling ribosomes from one round of translation to another. The protein is Ribosome-recycling factor of Acetivibrio thermocellus (strain ATCC 27405 / DSM 1237 / JCM 9322 / NBRC 103400 / NCIMB 10682 / NRRL B-4536 / VPI 7372) (Clostridium thermocellum).